Here is a 278-residue protein sequence, read N- to C-terminus: Methyltransferase adrK (278 aa).

Residues 124–125, 151–152, and 152–153 each bind S-adenosyl-L-methionine; these read DL, DV, and VL.

Belongs to the class I-like SAM-binding methyltransferase superfamily. Homodimer.

Its pathway is secondary metabolite biosynthesis; terpenoid biosynthesis. Its function is as follows. Methyltransferase; part of the gene cluster that mediates the biosynthesis of andrastins, meroterpenoid compounds that exhibit inhibitory activity against ras farnesyltransferase, suggesting that they could be promising leads for antitumor agents. The first step of the pathway is the synthesis of 3,5-dimethylorsellinic acid (DMOA) by the polyketide synthase adrD via condensation of one acetyl-CoA starter unit with 3 malonyl-CoA units and 2 methylations. DMAO is then converted to farnesyl-DMAO by the prenyltransferase adrG. The methyltransferase adrK catalyzes the methylation of the carboxyl group of farnesyl-DMAO to farnesyl-DMAO methyl ester which is further converted to epoxyfarnesyl-DMAO methyl ester by the FAD-dependent monooxygenase adrH. The terpene cyclase adrI then catalyzes the carbon skeletal rearrangement to generate the andrastin E, the first compound in the pathway having the andrastin scaffold, with the tetracyclic ring system. The post-cyclization tailoring enzymes adrF, adrE, adrJ, and adrA, are involved in the conversion of andrastin E into andrastin A. The short chain dehydrogenase adrF is responsible for the oxidation of the C-3 a hydroxyl group of andrastin E to yield the corresponding ketone, andrastin D. The ketoreductase adrE stereoselectively reduces the carbonyl moiety to reverse the stereochemistry of the C-3 position to yield andrastin F. The acetyltransferase adrJ is the acetyltransferase that attaches the acetyl group to the C-3 hydroxyl group of andrastin F to yield andrastin C. Finally, the cytochrome P450 monooxygenase adrA catalyzes two sequential oxidation reactions of the C-23 methyl group, to generate the corresponding alcohol andrastin B, and aldehyde andrastin A. This Penicillium roqueforti protein is Methyltransferase adrK.